We begin with the raw amino-acid sequence, 463 residues long: Phosphomethylpyrimidine synthase (463 aa).

Substrate is bound by residues Asn-80, Met-109, Tyr-138, His-173, 193 to 195 (SRG), 234 to 237 (DGLR), and Glu-273. Position 277 (His-277) interacts with Zn(2+). Position 300 (Tyr-300) interacts with substrate. His-341 provides a ligand contact to Zn(2+). Positions 421, 424, and 429 each coordinate [4Fe-4S] cluster.

This sequence belongs to the ThiC family. In terms of assembly, homodimer. Requires [4Fe-4S] cluster as cofactor.

It carries out the reaction 5-amino-1-(5-phospho-beta-D-ribosyl)imidazole + S-adenosyl-L-methionine = 4-amino-2-methyl-5-(phosphooxymethyl)pyrimidine + CO + 5'-deoxyadenosine + formate + L-methionine + 3 H(+). It participates in cofactor biosynthesis; thiamine diphosphate biosynthesis. Catalyzes the synthesis of the hydroxymethylpyrimidine phosphate (HMP-P) moiety of thiamine from aminoimidazole ribotide (AIR) in a radical S-adenosyl-L-methionine (SAM)-dependent reaction. In Anaeromyxobacter dehalogenans (strain 2CP-1 / ATCC BAA-258), this protein is Phosphomethylpyrimidine synthase.